Consider the following 100-residue polypeptide: RNA-binding protein YlxQ (100 aa).

Belongs to the eukaryotic ribosomal protein eL8 family.

RNA-binding protein that recognizes the K-turn motif present in ribosomal RNA, but also in box C/D and box C'/D' sRNAs. This is RNA-binding protein YlxQ from Bacillus subtilis (strain 168).